Consider the following 82-residue polypeptide: Sec-independent protein translocase protein TatA (82 aa).

A helical transmembrane segment spans residues 1 to 21; it reads MGGISIWQLLIIAVIIVLLFG. Residues 48–82 are disordered; that stretch reads SAKDAKKDADFVPQNLEKKEAETVEKQKQNDKEQA.

This sequence belongs to the TatA/E family. In terms of assembly, the Tat system comprises two distinct complexes: a TatABC complex, containing multiple copies of TatA, TatB and TatC subunits, and a separate TatA complex, containing only TatA subunits. Substrates initially bind to the TatABC complex, which probably triggers association of the separate TatA complex to form the active translocon.

It localises to the cell inner membrane. Its function is as follows. Part of the twin-arginine translocation (Tat) system that transports large folded proteins containing a characteristic twin-arginine motif in their signal peptide across membranes. TatA could form the protein-conducting channel of the Tat system. The sequence is that of Sec-independent protein translocase protein TatA from Aliivibrio salmonicida (strain LFI1238) (Vibrio salmonicida (strain LFI1238)).